A 287-amino-acid chain; its full sequence is Vesicle-associated protein 4-3 (287 aa).

Over residues 1–14 the composition is skewed to basic and acidic residues; it reads MALTEDKSDSDGRR. Residues 1-45 are disordered; that stretch reads MALTEDKSDSDGRRWGKFKLPFRNSNSQAPSASSSSSMATSSSSV. Over residues 25-45 the composition is skewed to low complexity; the sequence is SNSQAPSASSSSSMATSSSSV. The MSP domain occupies 99 to 221; the sequence is RLKLDPSAKL…EEQVMRVVFL (123 aa).

It belongs to the VAMP-associated protein (VAP) (TC 9.B.17) family.

May play a role in vesicle trafficking. The protein is Vesicle-associated protein 4-3 (PVA43) of Arabidopsis thaliana (Mouse-ear cress).